A 1089-amino-acid chain; its full sequence is MTDDSLKIGNGLPLVGPGTDVGISSLPMLGYLGKNYASAKVTTDGHCPACRAKGKLSALKPYRISFQESVFLCEDLQCIYPLGSESLTNLISPDSEDCPTPSKPQKRKRLETNCRNSPLPVHSKKTRSHIVTDSEPIVNGKYNGEVCDDFSASFPDTSAHQDPASTAASVEQSEALEADDVVVAATEDPATVSVTSELEMPAKSRCLPLCQTLCVQWKNTQALCWLDCILSALVHLEVLRKTVLEACSREECVFGRLFEMYHQADELLHTHHLHGVTGEDCKKLTSEIFTEIDTCLNKVRDEIFAKLQPKLRCTLGDMESPVFALPVLLKLEPHVESLFTYSFSWNFECSHCGHQYQNRCVKSLVTFTNIVPEWHPLNAAHFGPCNSCNSKSQIRKMVLERASPILMLHFVEGLPRRDLQHYAFHFEGSLYQVTSVIQYQANNHFITWFLDADGSWLECDDLKGPCAKRHVTCEVPASETHIVIWERKSQVPIEEAACLPCMKPNVQPVSGEEQPTCPALCSLAGTATSEPSVAHPTSMAGAPQTLPEIQAVAHGDSVLSGAKGMVDSILPSALEETIQETASVSQVDSKDCLLEDKPVAGSAALVRVLAFQPQDSPGSSGSSLVSSLCEGKLVAPCVDSSFPSQAVSTDLQAVLSQAGDTVVPNPVTDAPVPVLVQELKSLATEKDSQTQLLPLKTEKLDPEQPGKSQASNLRKRETTASSKTVAARSAQNQPRKEDQKRAFVGSWVKGLLSRGGAFMPTCVLSQSRAVSDLQPSVKGASNFDGFKTKSISRRSKRMSRKAKHMEELSPRNSSPPLSWTAALTQAAENATSALLREQEGSRPAPLRHRSPGNESAISPASRGDAAEDQVHKLRLKLLKKLKAKKKKLAALISSPHREPSLSDHSEPASHCGTPASDQSEPVSHCGSPNDCESIEDLLKELQHQIDLADSKSGCTSAPDATSNNSQSHEEILAELLSPTAMSEPSESGELELRYLEMGDSTPAQAPSEFSVVSLNTCLKQDHDYCSPEKGQREVDLHSVMDSACIRTLNLGSPMKTDIFDDFFSTSALNSLTNDTLDIPHFDDSLFENC.

The segment at 90–128 (LISPDSEDCPTPSKPQKRKRLETNCRNSPLPVHSKKTRS) is disordered. One can recognise a USP domain in the interval 215–488 (VQWKNTQALC…ETHIVIWERK (274 aa)). Residue Cys224 is the Nucleophile of the active site. The interval 224 to 483 (CWLDCILSAL…EVPASETHIV (260 aa)) is SUMO-binding. The active-site Proton acceptor is His444. Disordered stretches follow at residues 687 to 739 (DSQT…KEDQ), 791 to 817 (ISRRSKRMSRKAKHMEELSPRNSSPPL), 835 to 868 (LREQEGSRPAPLRHRSPGNESAISPASRGDAAED), and 891 to 928 (LISSPHREPSLSDHSEPASHCGTPASDQSEPVSHCGSP). The span at 719-733 (TASSKTVAARSAQNQ) shows a compositional bias: polar residues. A compositionally biased stretch (basic residues) spans 791-803 (ISRRSKRMSRKAK). Ser894 bears the Phosphoserine mark. Positions 895–907 (PHREPSLSDHSEP) are enriched in basic and acidic residues.

This sequence belongs to the peptidase C19 family. As to quaternary structure, interacts with ELL.

It localises to the nucleus. Its subcellular location is the cajal body. In terms of biological role, SUMO-specific isopeptidase involved in protein desumoylation. Specifically binds SUMO proteins with a higher affinity for SUMO2 and SUMO3 which it cleaves more efficiently. Also able to process full-length SUMO proteins to their mature forms. Plays a key role in RNA polymerase-II-mediated snRNA transcription in the Cajal bodies. Is a component of complexes that can bind to U snRNA genes. The sequence is that of SUMO-specific isopeptidase USPL1 (Uspl1) from Mus musculus (Mouse).